The primary structure comprises 134 residues: Profilin-2 (134 aa).

Cysteine 13 and cysteine 118 are disulfide-bonded. The Involved in PIP2 interaction motif lies at 84–100 (AVTRGKKGTGGITIKKT). At threonine 114 the chain carries Phosphothreonine.

It belongs to the profilin family. Occurs in many kinds of cells as a complex with monomeric actin in a 1:1 ratio. Post-translationally, phosphorylated by MAP kinases.

It is found in the cytoplasm. It localises to the cytoskeleton. Its function is as follows. Binds to actin and affects the structure of the cytoskeleton. At high concentrations, profilin prevents the polymerization of actin, whereas it enhances it at low concentrations. This is Profilin-2 from Olea europaea (Common olive).